The primary structure comprises 305 residues: GTPase Era (305 aa).

The 169-residue stretch at Arg-13–Glu-181 folds into the Era-type G domain. The G1 stretch occupies residues Gly-21–Ser-28. Gly-21–Ser-28 contacts GTP. Residues Gln-47 to His-51 are G2. Positions Asp-68–Gly-71 are G3. GTP contacts are provided by residues Asp-68–Met-72 and Asn-130–Asp-133. Positions Asn-130 to Asp-133 are G4. Residues Leu-160–Ala-162 are G5. Positions Val-204 to Arg-288 constitute a KH type-2 domain.

This sequence belongs to the TRAFAC class TrmE-Era-EngA-EngB-Septin-like GTPase superfamily. Era GTPase family. In terms of assembly, monomer.

It localises to the cytoplasm. The protein localises to the cell inner membrane. Functionally, an essential GTPase that binds both GDP and GTP, with rapid nucleotide exchange. Plays a role in 16S rRNA processing and 30S ribosomal subunit biogenesis and possibly also in cell cycle regulation and energy metabolism. The sequence is that of GTPase Era from Marinobacter nauticus (strain ATCC 700491 / DSM 11845 / VT8) (Marinobacter aquaeolei).